The following is a 565-amino-acid chain: Nephronectin (565 aa).

The N-terminal stretch at 1-19 is a signal peptide; that stretch reads MDFLLALVLVSSLYLQAAA. An EGF-like 1 domain is found at 52–87; the sequence is SWGQCQPVCQPRCKHGECIGPNKCKCHPGYAGKTCN. Cystine bridges form between Cys56-Cys69, Cys60-Cys75, Cys77-Cys86, Cys93-Cys104, Cys100-Cys113, and Cys115-Cys127. The EGF-like 2; calcium-binding domain maps to 89–128; it reads DLNECGLKPRPCKHRCMNTYGSYKCYCLNGYMLMPDGSCS. The region spanning 132–168 is the EGF-like 3 domain; sequence TCSMANCQYGCDVVKGQIRCQCPSPGLQLAPDGRTCV. In terms of domain architecture, EGF-like 4; calcium-binding spans 169 to 213; the sequence is DVDECATGRASCPRFRQCVNTFGSYICKCHKGFNLMYIGGKYQCH. Intrachain disulfides connect Cys173-Cys186, Cys180-Cys195, Cys197-Cys212, Cys218-Cys231, Cys225-Cys240, and Cys242-Cys253. The EGF-like 5; calcium-binding domain occupies 214-254; that stretch reads DIDECSLGQYQCSSFARCYNIHGSYKCKCKEGYQGDGLTCV. The tract at residues 301–373 is disordered; it reads YIPPIITNRP…PPGGITVDNR (73 aa). Residues 304 to 316 show a composition bias toward low complexity; that stretch reads PIITNRPTSKPTT. Residues 317–349 show a composition bias toward pro residues; the sequence is RPTPKPTPIPTPPPPPPLPTELRTPLPPTTPER. The short motif at 382–384 is the Integrin interaction element; the sequence is RGD. The MAM domain maps to 420 to 563; sequence HSCNFDHGLC…VSLKKGHCSE (144 aa).

Belongs to the nephronectin family. Homodimer and homotrimer.

It localises to the secreted. It is found in the extracellular space. Its subcellular location is the extracellular matrix. In terms of biological role, functional ligand of integrin alpha-8/beta-1 in kidney development. Regulates the expression of GDNF with integrin alpha-8/beta-1 which is essential for kidney development. May also play a role in the development and function of various tissues, regulating cell adhesion, spreading and survival through the binding of several integrins. This chain is Nephronectin (NPNT), found in Pongo abelii (Sumatran orangutan).